Reading from the N-terminus, the 139-residue chain is U6 snRNA-associated Sm-like protein LSm4 (139 aa).

N-acetylmethionine is present on methionine 1. The 74-residue stretch at 2-75 (LPLSLLKTAQ…IKYLRIPDEI (74 aa)) folds into the Sm domain. Residue lysine 80 forms a Glycyl lysine isopeptide (Lys-Gly) (interchain with G-Cter in SUMO2) linkage. The segment at 87-139 (GRGRGGLQQQKQQKGRGMGGAGRGVFGGRGRGGIPGTGRGQPEKKPGRQAGKQ) is disordered. Residues 102-125 (RGMGGAGRGVFGGRGRGGIPGTGR) show a composition bias toward gly residues.

The protein belongs to the snRNP Sm proteins family. In terms of assembly, component of the precatalytic spliceosome (spliceosome B complex). Component of the U4/U6-U5 tri-snRNP complex, a building block of the precatalytic spliceosome (spliceosome B complex). The U4/U6-U5 tri-snRNP complex is composed of the U4, U6 and U5 snRNAs and at least PRPF3, PRPF4, PRPF6, PRPF8, PRPF31, SNRNP200, TXNL4A, SNRNP40, SNRPB, SNRPD1, SNRPD2, SNRPD3, SNRPE, SNRPF, SNRPG, DDX23, CD2BP2, PPIH, SNU13, EFTUD2, SART1 and USP39, plus LSM2, LSM3, LSM4, LSM5, LSM6, LSM7 and LSM8. LSM2, LSM3, LSM4, LSM5, LSM6, LSM7 and LSM8 form a heptameric, ring-shaped subcomplex (the LSM2-8 complex) that is part of the U4/U6-U5 tri-snRNP complex and the precatalytic spliceosome.

Its subcellular location is the nucleus. Plays a role in pre-mRNA splicing as component of the U4/U6-U5 tri-snRNP complex that is involved in spliceosome assembly, and as component of the precatalytic spliceosome (spliceosome B complex). The heptameric LSM2-8 complex binds specifically to the 3'-terminal U-tract of U6 snRNA. The protein is U6 snRNA-associated Sm-like protein LSm4 (LSM4) of Bos taurus (Bovine).